The sequence spans 310 residues: Tagatose-6-phosphate kinase (310 aa).

Belongs to the carbohydrate kinase PfkB family. LacC subfamily.

It carries out the reaction D-tagatofuranose 6-phosphate + ATP = D-tagatofuranose 1,6-bisphosphate + ADP + H(+). It participates in carbohydrate metabolism; D-tagatose 6-phosphate degradation; D-glyceraldehyde 3-phosphate and glycerone phosphate from D-tagatose 6-phosphate: step 1/2. The chain is Tagatose-6-phosphate kinase from Staphylococcus epidermidis (strain ATCC 12228 / FDA PCI 1200).